The following is a 172-amino-acid chain: Ubiquitin-conjugating enzyme E2 PEX4 (172 aa).

The UBC core domain maps to S14–S167. The active-site Glycyl thioester intermediate is C104.

It belongs to the ubiquitin-conjugating enzyme family.

It carries out the reaction S-ubiquitinyl-[E1 ubiquitin-activating enzyme]-L-cysteine + [E2 ubiquitin-conjugating enzyme]-L-cysteine = [E1 ubiquitin-activating enzyme]-L-cysteine + S-ubiquitinyl-[E2 ubiquitin-conjugating enzyme]-L-cysteine.. Its pathway is protein modification; protein ubiquitination. Ubiquitin-conjugating enzyme E2 that is essential for peroxisome biogenesis and plays a key role in development, pathogenicity, and cell wall integrity. Required for long and very long-chain fatty acid utilization and is involved in lipid droplet accumulation and the elimination of reactive oxygen species. Controls the expression of proteins involved in protein biosynthesis, fatty acid metabolism, cell wall synthesis, oxidation-reduction reactions, as well as of the enzymes involved in the biosynthesis of the mycotoxin deoxynivalenol (DON), including TRI5, TRI6, and TRI10. The chain is Ubiquitin-conjugating enzyme E2 PEX4 from Gibberella zeae (strain ATCC MYA-4620 / CBS 123657 / FGSC 9075 / NRRL 31084 / PH-1) (Wheat head blight fungus).